We begin with the raw amino-acid sequence, 349 residues long: MVRAKRKLDHIEYALSTGQSRTHGFHDIDFVHQSLPNSNYDTITCETKIGELSLSSPIFINAMTGGGGEKTLHINEQLAYVAKHHNLAMAVGSQMAALKDESEAASYKIIRKVNPNGIFFANLGSEATIEQAERAVDMIEANALQIHLNVIQELTMPEGDRDFTGVLRRIEKIVLNSKVPVIVKEVGFGMSKETMQQLASIGVTAIDIGGQGGTNFAAVENERRQRMLSYFNNWGIQTATSIVEATSTNNNLSFIASGGIQTALDVAKAIALGANTTAFAGYFLRILMQDGIEKLVDEIDLLHTDLKFIMTALGAKTIEELQSVPLVVKGETYHWLTQRGIDTTHYSRR.

6–7 (RK) is a substrate binding site. Residues 62–64 (AMT), Ser93, and Asn122 each bind FMN. Gln152 lines the substrate pocket. Glu153 is a binding site for Mg(2+). Residues Lys184, Thr214, 258 to 259 (GG), and 280 to 281 (AG) contribute to the FMN site.

It belongs to the IPP isomerase type 2 family. As to quaternary structure, homooctamer. Dimer of tetramers. FMN serves as cofactor. The cofactor is NADPH. It depends on Mg(2+) as a cofactor.

Its subcellular location is the cytoplasm. The catalysed reaction is isopentenyl diphosphate = dimethylallyl diphosphate. Involved in the biosynthesis of isoprenoids. Catalyzes the 1,3-allylic rearrangement of the homoallylic substrate isopentenyl (IPP) to its allylic isomer, dimethylallyl diphosphate (DMAPP). This Bacillus cereus (strain ATCC 10987 / NRS 248) protein is Isopentenyl-diphosphate delta-isomerase.